The following is a 209-amino-acid chain: Potassium-transporting ATPase KdpC subunit (209 aa).

Residues 11 to 31 (MILALTVLTGLAYPLAVTAVA) traverse the membrane as a helical segment. The disordered stretch occupies residues 188–209 (AQAPTPRQPEPGHPEPGRPEVR). Residues 197 to 209 (EPGHPEPGRPEVR) are compositionally biased toward basic and acidic residues.

This sequence belongs to the KdpC family. In terms of assembly, the system is composed of three essential subunits: KdpA, KdpB and KdpC.

It is found in the cell inner membrane. In terms of biological role, part of the high-affinity ATP-driven potassium transport (or Kdp) system, which catalyzes the hydrolysis of ATP coupled with the electrogenic transport of potassium into the cytoplasm. This subunit acts as a catalytic chaperone that increases the ATP-binding affinity of the ATP-hydrolyzing subunit KdpB by the formation of a transient KdpB/KdpC/ATP ternary complex. In Rhodospirillum centenum (strain ATCC 51521 / SW), this protein is Potassium-transporting ATPase KdpC subunit.